Here is a 201-residue protein sequence, read N- to C-terminus: Phospholipase A2 inhibitor PIP (201 aa).

An N-terminal signal peptide occupies residues 1-19; it reads MKSLQTICLLFIFIARGTS. 8 cysteine pairs are disulfide-bonded: C22/C46, C25/C32, C39/C67, C73/C94, C95/C100, C118/C143, C136/C165, and C169/C191. N-linked (GlcNAc...) asparagine glycosylation is present at N157.

Homohexamer. Glycosylated. Expressed by the liver.

The protein localises to the secreted. In terms of biological role, inhibits the enzymatic activity of phospholipase A2 (PA2). Binds to the major PLA2 toxin of D.russelli siamensis (Daboiatoxin, AC Q7T2R1, and AC Q7T3T5) at 1-2-fold molar excess of inhibitor to toxin. It exhibits broad spectra in neutralizing the toxicity of various snake venoms and toxins and inhibits the formation of edema in mice. May bind to PLA2 through its proline-rich hydrophobic core region. The protein is Phospholipase A2 inhibitor PIP of Malayopython reticulatus (Reticulate python).